The sequence spans 89 residues: MSLDKGTKEEITKKFQLHEKDTGSADVQIAILTEHITELKEHLKRSPKDQNSRLALLKLVGQRRKLLEYLNSTDTERYKNLIARLNLRK.

It belongs to the universal ribosomal protein uS15 family. In terms of assembly, part of the 30S ribosomal subunit. Forms a bridge to the 50S subunit in the 70S ribosome, contacting the 23S rRNA.

Functionally, one of the primary rRNA binding proteins, it binds directly to 16S rRNA where it helps nucleate assembly of the platform of the 30S subunit by binding and bridging several RNA helices of the 16S rRNA. Forms an intersubunit bridge (bridge B4) with the 23S rRNA of the 50S subunit in the ribosome. This chain is Small ribosomal subunit protein uS15, found in Chlamydia muridarum (strain MoPn / Nigg).